The chain runs to 214 residues: Uridine kinase (214 aa).

15 to 22 (GASASGKS) contacts ATP.

This sequence belongs to the uridine kinase family.

The protein resides in the cytoplasm. The catalysed reaction is uridine + ATP = UMP + ADP + H(+). It carries out the reaction cytidine + ATP = CMP + ADP + H(+). It participates in pyrimidine metabolism; CTP biosynthesis via salvage pathway; CTP from cytidine: step 1/3. It functions in the pathway pyrimidine metabolism; UMP biosynthesis via salvage pathway; UMP from uridine: step 1/1. In Tolumonas auensis (strain DSM 9187 / NBRC 110442 / TA 4), this protein is Uridine kinase.